The primary structure comprises 307 residues: Nucleotide-binding protein Achl_1824 (307 aa).

30–37 (GMSGAGRS) is a binding site for ATP. GTP is bound at residue 81–84 (DVRS).

This sequence belongs to the RapZ-like family.

Its function is as follows. Displays ATPase and GTPase activities. This Pseudarthrobacter chlorophenolicus (strain ATCC 700700 / DSM 12829 / CIP 107037 / JCM 12360 / KCTC 9906 / NCIMB 13794 / A6) (Arthrobacter chlorophenolicus) protein is Nucleotide-binding protein Achl_1824.